The sequence spans 367 residues: 4-hydroxy-3-methylbut-2-en-1-yl diphosphate synthase (flavodoxin) (367 aa).

[4Fe-4S] cluster is bound by residues Cys265, Cys268, Cys300, and Glu307.

It belongs to the IspG family. Requires [4Fe-4S] cluster as cofactor.

The catalysed reaction is (2E)-4-hydroxy-3-methylbut-2-enyl diphosphate + oxidized [flavodoxin] + H2O + 2 H(+) = 2-C-methyl-D-erythritol 2,4-cyclic diphosphate + reduced [flavodoxin]. It functions in the pathway isoprenoid biosynthesis; isopentenyl diphosphate biosynthesis via DXP pathway; isopentenyl diphosphate from 1-deoxy-D-xylulose 5-phosphate: step 5/6. Converts 2C-methyl-D-erythritol 2,4-cyclodiphosphate (ME-2,4cPP) into 1-hydroxy-2-methyl-2-(E)-butenyl 4-diphosphate. The chain is 4-hydroxy-3-methylbut-2-en-1-yl diphosphate synthase (flavodoxin) from Bacillus cereus (strain ATCC 10987 / NRS 248).